The following is a 510-amino-acid chain: Probable cytosol aminopeptidase (510 aa).

The Mn(2+) site is built by K282 and D287. Residue K294 is part of the active site. The Mn(2+) site is built by D305, D364, and E366. R368 is a catalytic residue.

The protein belongs to the peptidase M17 family. It depends on Mn(2+) as a cofactor.

It localises to the cytoplasm. The enzyme catalyses Release of an N-terminal amino acid, Xaa-|-Yaa-, in which Xaa is preferably Leu, but may be other amino acids including Pro although not Arg or Lys, and Yaa may be Pro. Amino acid amides and methyl esters are also readily hydrolyzed, but rates on arylamides are exceedingly low.. It catalyses the reaction Release of an N-terminal amino acid, preferentially leucine, but not glutamic or aspartic acids.. Functionally, presumably involved in the processing and regular turnover of intracellular proteins. Catalyzes the removal of unsubstituted N-terminal amino acids from various peptides. The polypeptide is Probable cytosol aminopeptidase (Cupriavidus pinatubonensis (strain JMP 134 / LMG 1197) (Cupriavidus necator (strain JMP 134))).